A 176-amino-acid polypeptide reads, in one-letter code: Neuropeptide-like protein 1 (176 aa).

An N-terminal signal peptide occupies residues 1–19 (MKATFVLACLLVIAAVSHA). Positions 59–79 (GKRSAEQNEQANKEDKATSDK) are disordered. Over residues 61 to 79 (RSAEQNEQANKEDKATSDK) the composition is skewed to basic and acidic residues.

In terms of biological role, in AWC olfactory sensory neurons, required for the detection of preferred food sources. The protein is Neuropeptide-like protein 1 (nlp-1) of Caenorhabditis elegans.